Here is a 137-residue protein sequence, read N- to C-terminus: Nucleoside diphosphate kinase (137 aa).

Residues K10, F58, R86, T92, R103, and N113 each coordinate ATP. H116 (pros-phosphohistidine intermediate) is an active-site residue.

Belongs to the NDK family. As to quaternary structure, homotetramer. Mg(2+) is required as a cofactor.

It localises to the cytoplasm. The catalysed reaction is a 2'-deoxyribonucleoside 5'-diphosphate + ATP = a 2'-deoxyribonucleoside 5'-triphosphate + ADP. It catalyses the reaction a ribonucleoside 5'-diphosphate + ATP = a ribonucleoside 5'-triphosphate + ADP. Its function is as follows. Major role in the synthesis of nucleoside triphosphates other than ATP. The ATP gamma phosphate is transferred to the NDP beta phosphate via a ping-pong mechanism, using a phosphorylated active-site intermediate. This chain is Nucleoside diphosphate kinase, found in Helicobacter pylori (strain ATCC 700392 / 26695) (Campylobacter pylori).